The primary structure comprises 465 residues: Argininosuccinate lyase (465 aa).

This sequence belongs to the lyase 1 family. Argininosuccinate lyase subfamily.

The protein resides in the cytoplasm. It carries out the reaction 2-(N(omega)-L-arginino)succinate = fumarate + L-arginine. It participates in amino-acid biosynthesis; L-arginine biosynthesis; L-arginine from L-ornithine and carbamoyl phosphate: step 3/3. The protein is Argininosuccinate lyase of Deinococcus geothermalis (strain DSM 11300 / CIP 105573 / AG-3a).